Here is a 350-residue protein sequence, read N- to C-terminus: Biotin synthase 1 (350 aa).

Residues 71–296 (EEVEVEGIIS…KTILRFAGGR (226 aa)) enclose the Radical SAM core domain. Cysteine 86, cysteine 90, and cysteine 93 together coordinate [4Fe-4S] cluster. The [2Fe-2S] cluster site is built by cysteine 129, cysteine 221, and arginine 291.

The protein belongs to the radical SAM superfamily. Biotin synthase family. As to quaternary structure, homodimer. [4Fe-4S] cluster serves as cofactor. It depends on [2Fe-2S] cluster as a cofactor.

It catalyses the reaction (4R,5S)-dethiobiotin + (sulfur carrier)-SH + 2 reduced [2Fe-2S]-[ferredoxin] + 2 S-adenosyl-L-methionine = (sulfur carrier)-H + biotin + 2 5'-deoxyadenosine + 2 L-methionine + 2 oxidized [2Fe-2S]-[ferredoxin]. Its pathway is cofactor biosynthesis; biotin biosynthesis; biotin from 7,8-diaminononanoate: step 2/2. Functionally, catalyzes the conversion of dethiobiotin (DTB) to biotin by the insertion of a sulfur atom into dethiobiotin via a radical-based mechanism. The protein is Biotin synthase 1 of Corynebacterium diphtheriae (strain ATCC 700971 / NCTC 13129 / Biotype gravis).